The primary structure comprises 944 residues: Trehalose monomycolate exporter MmpL3 (944 aa).

Over 1–13 the chain is Cytoplasmic; the sequence is MFAWWGRTVYRYR. A helical transmembrane segment spans residues 14 to 34; sequence FIVIGVMVALCLGGGVFGLSL. The Periplasmic segment spans residues 35–185; the sequence is GKHVTQSGFY…TIATDQRRME (151 aa). 40–44 is an a 1,2-diacylglycero-3-phosphoethanolamine binding site; the sequence is QSGFY. Residues 186 to 206 form a helical membrane-spanning segment; it reads VLALPLVAVVLFFVFGGVIAA. Over 207–209 the chain is Cytoplasmic; the sequence is GLP. Residues 210-230 form a helical membrane-spanning segment; sequence VMVGGLCIAGALGIMRFLAIF. The Periplasmic segment spans residues 231 to 235; sequence GPVHY. The chain crosses the membrane as a helical span at residues 236–256; it reads FAQPVVSLIGLGIAIDYGLFI. Residues 257 to 286 are Cytoplasmic-facing; the sequence is VSRFREEIAEGYDTETAVRRTVITAGRTVT. Residues 287 to 307 form a helical membrane-spanning segment; the sequence is FSAVLIVASAIGLLLFPQGFL. Residues 308–314 are Periplasmic-facing; that stretch reads KSLTYAT. The chain crosses the membrane as a helical span at residues 315-335; sequence IASVMLSAILSITVLPACLGI. Residues 336–396 are Cytoplasmic-facing; the sequence is LGKHVDALGV…KLVNRVMKRP (61 aa). A helical transmembrane segment spans residues 397–417; it reads VLFAAPIVIIMILLIIPVGKL. Residues 418 to 562 lie on the Periplasmic side of the membrane; the sequence is SLGGISEKYL…HGLFAKMPLM (145 aa). Residues 563 to 583 form a helical membrane-spanning segment; the sequence is VVILLTTTIVLMFLAFGSVVL. Over 584–586 the chain is Cytoplasmic; the sequence is PIK. The helical transmembrane segment at 587-607 threads the bilayer; the sequence is ATLMSALTLGSTMGILTWIFV. At 608–616 the chain is on the periplasmic side; it reads DGHFSKWLN. The chain crosses the membrane as a helical span at residues 617-637; sequence FTPTPLTAPVIGLIIALVFGL. Residues 638 to 672 lie on the Cytoplasmic side of the membrane; that stretch reads STDYEVFLVSRMVEARERGMSTQEAIRIGTAATGR. The chain crosses the membrane as a helical span at residues 673–693; that stretch reads IITAAALIVAVVAGAFVFSDL. Residues 694-698 are Periplasmic-facing; sequence VMMKY. A helical transmembrane segment spans residues 699–719; the sequence is LAFGLMAALLLDATVVRMFLV. Residues 720–944 are Cytoplasmic-facing; that stretch reads PSVMKLLGDD…QDLLRREGRL (225 aa). The tract at residues 778–944 is disordered; that stretch reads AAGDPRPPHD…QDLLRREGRL (167 aa). Low complexity predominate over residues 791-828; it reads PLAESPRPARSSPASSPELTPALEATAAPAAPSGASTT. The span at 829–839 shows a compositional bias: polar residues; it reads RMQIGSSTEPP. Residues 855–866 show a composition bias toward pro residues; that stretch reads STPPPTPTPPSA.

This sequence belongs to the resistance-nodulation-cell division (RND) (TC 2.A.6) family. MmpL subfamily. In terms of assembly, monomer. Interacts with TtfA (via N-terminus); active trehalose monomycolate (TMM) biosynthesis is not required for the complex formation.

The protein resides in the cell inner membrane. It is found in the cell septum. It localises to the cell tip. In terms of biological role, transports trehalose monomycolate (TMM) to the cell wall. Flips TMM across the inner membrane. Membrane potential is not required for this function. Transports probably phosphatidylethanolamine (PE) as well. Binds specifically both TMM and PE, but not trehalose dimycolate (TDM). Also binds diacylglycerol (DAG) and other phospholipids, including phosphatidylglycerol (PG), phosphatidylinositol (PI), and cardiolipin (CDL). Contributes to membrane potential, cell wall composition, antibiotic susceptibility and fitness. Could also be part of a heme-iron acquisition system. The chain is Trehalose monomycolate exporter MmpL3 (mmpL3) from Mycobacterium tuberculosis (strain CDC 1551 / Oshkosh).